The primary structure comprises 227 residues: Uracil-DNA glycosylase (227 aa).

The Proton acceptor role is filled by D68.

The protein belongs to the uracil-DNA glycosylase (UDG) superfamily. UNG family.

The protein resides in the cytoplasm. The catalysed reaction is Hydrolyzes single-stranded DNA or mismatched double-stranded DNA and polynucleotides, releasing free uracil.. Functionally, excises uracil residues from the DNA which can arise as a result of misincorporation of dUMP residues by DNA polymerase or due to deamination of cytosine. This chain is Uracil-DNA glycosylase, found in Mycobacterium leprae (strain Br4923).